The primary structure comprises 117 residues: Zinc metalloproteinase/disintegrin (117 aa).

Residues Thr-36 to Ala-117 form the Disintegrin domain. Disulfide bonds link Cys-50-Cys-65, Cys-52-Cys-60, Cys-59-Cys-82, Cys-73-Cys-79, Cys-78-Cys-103, and Cys-91-Cys-110. Residues Arg-95–Asp-97 carry the Cell attachment site motif.

This sequence belongs to the venom metalloproteinase (M12B) family. P-II subfamily. P-IIa sub-subfamily. Monomer. Zn(2+) is required as a cofactor. In terms of tissue distribution, expressed by the venom gland.

The protein resides in the secreted. Functionally, impairs hemostasis in the envenomed animal. In terms of biological role, inhibits platelet aggregation and bone resorption. The polypeptide is Zinc metalloproteinase/disintegrin (Gloydius halys (Chinese water mocassin)).